The primary structure comprises 331 residues: uncharacterized protein (331 aa).

7 consecutive Pentapeptide repeat domains span residues 20-59 (LKLPGINLEAADLIGIVLNEADLRGANLLFCYLNRANLGQ), 60-99 (ANLVAANLSGASLNQADLAGADLRSANFHGAMLQGAILRD), 100-139 (SDMTLATLQDTNLIGADLRGADLSGATLTGACLRGANMRQ), 151-190 (AILGRADLQGANMKGVDLSRADLSYANLKEANLRDVDLRK), 191-230 (ADLSYANLKGALLTDANLSGAKLNGADLQNANLMRAKISE), 231-270 (AEMTAVNCQGAIMTHVNLNRTNLTGSNLSFTRMNSADLSR), and 271-310 (ANLTKANLQEAELIEAFFARANLTEANFINANLVRADLMS).

This is an uncharacterized protein from Synechocystis sp. (strain ATCC 27184 / PCC 6803 / Kazusa).